A 139-amino-acid chain; its full sequence is Cytochrome c-type biogenesis protein CcmE 2 (139 aa).

The Cytoplasmic segment spans residues 1–9; sequence MASLKKSRR. A helical; Signal-anchor for type II membrane protein transmembrane segment spans residues 10 to 30; the sequence is VRLILFSGVALVSATALIGYA. Over 31–139 the chain is Periplasmic; sequence MRDGIQFFRT…ELAEMEALRD (109 aa). Positions 122 and 126 each coordinate heme.

It belongs to the CcmE/CycJ family.

Its subcellular location is the cell inner membrane. Functionally, heme chaperone required for the biogenesis of c-type cytochromes. Transiently binds heme delivered by CcmC and transfers the heme to apo-cytochromes in a process facilitated by CcmF and CcmH. This Ruegeria pomeroyi (strain ATCC 700808 / DSM 15171 / DSS-3) (Silicibacter pomeroyi) protein is Cytochrome c-type biogenesis protein CcmE 2.